The chain runs to 334 residues: Formamidase (334 aa).

One can recognise a CN hydrolase domain in the interval 14–260; it reads FLVAAIQFPV…WEIVTGEIYP (247 aa). E60 functions as the Proton acceptor in the catalytic mechanism. K133 serves as the catalytic Proton donor. C166 acts as the Nucleophile in catalysis.

It belongs to the carbon-nitrogen hydrolase superfamily. Aliphatic amidase family. Homotetramer.

It carries out the reaction formamide + H2O = formate + NH4(+). Inhibited by iodoacetate. Appears to be regulated by the fur protein, but this effect is not mediated at the transcriptional level. Its function is as follows. Is an aliphatic amidase with a restricted substrate specificity, as it only hydrolyzes formamide. Probably involved in the nitrogen metabolism of H.pylori. The protein is Formamidase (amiF) of Helicobacter pylori (strain ATCC 700392 / 26695) (Campylobacter pylori).